An 896-amino-acid chain; its full sequence is Echinoderm microtubule-associated protein-like 3 (896 aa).

Met1 carries the N-acetylmethionine modification. Residues Leu16 to Leu43 adopt a coiled-coil conformation. Residues Pro50–Tyr209 form a disordered region. Residues Thr77–Glu88 show a composition bias toward polar residues. Pro residues predominate over residues Pro134 to Pro145. The segment covering Arg154–Ser163 has biased composition (low complexity). Over residues Ala174 to Ser189 the composition is skewed to polar residues. Phosphoserine is present on residues Ser176, Ser198, and Ser204. 13 WD repeats span residues Arg234–Pro286, Gly295–Ser344, Leu350–Cys392, Leu398–Trp434, Arg448–Arg487, Tyr504–Pro543, Gln549–Asp584, Phe589–Gly626, His629–Thr667, Ser674–Val709, Ser716–Val755, Arg765–Tyr823, and Ala830–Val869. The segment at Gly876 to Val896 is disordered. The segment covering Pro877–Val896 has biased composition (low complexity). Thr881 carries the post-translational modification Phosphothreonine; by CDK1. The residue at position 883 (Ser883) is a Phosphoserine.

Belongs to the WD repeat EMAP family. As to quaternary structure, homotrimer; self-association is mediated by the N-terminal coiled coil. Interacts with EML2 but not with EML1. Interacts (phosphorylated at Thr-881) with TUBG1, HAUS1, HAUS2, HAUS3, HAUS4, HAUS5, HAUS6, HAUS7 and HAUS8. Phosphorylation at Thr-881 during mitosis is required for interaction with TUBG1, HAUS1, HAUS2, HAUS3, HAUS4, HAUS5, HAUS6, HAUS7 and HAUS8 and their recruitment to spindle microtubules.

Its subcellular location is the cytoplasm. It is found in the cytoskeleton. The protein resides in the nucleus. The protein localises to the midbody. It localises to the spindle. Functionally, regulates mitotic spindle assembly, microtubule (MT)-kinetochore attachment and chromosome separation via recruitment of HAUS augmin-like complex and TUBG1 to the existing MTs and promoting MT-based MT nucleation. Required for proper alignnment of chromosomes during metaphase. In Homo sapiens (Human), this protein is Echinoderm microtubule-associated protein-like 3 (EML3).